A 149-amino-acid chain; its full sequence is Arginine repressor (149 aa).

It belongs to the ArgR family.

The protein localises to the cytoplasm. The protein operates within amino-acid biosynthesis; L-arginine biosynthesis [regulation]. Regulates arginine biosynthesis genes. This is Arginine repressor from Geobacillus kaustophilus (strain HTA426).